Reading from the N-terminus, the 540-residue chain is NAD(P)H-quinone oxidoreductase subunit 2 B, chloroplastic (540 aa).

13 consecutive transmembrane segments (helical) span residues 24 to 44 (LLLF…GLIL), 57 to 77 (IPWL…ALLF), 99 to 119 (IFQF…VEYI), 124 to 144 (MAIT…MFLC), 149 to 169 (FITI…LSGY), 183 to 203 (YLLM…WLYG), 227 to 247 (PGIS…LSPA), 325 to 345 (WHLL…LIAI), 353 to 373 (MLAY…IVGD), 384 to 404 (YMLF…LFGL), 425 to 445 (ALSL…AGFF), 448 to 468 (LYLF…IGLL), and 514 to 534 (MIVC…IIAI).

This sequence belongs to the complex I subunit 2 family. As to quaternary structure, NDH is composed of at least 16 different subunits, 5 of which are encoded in the nucleus.

The protein localises to the plastid. The protein resides in the chloroplast thylakoid membrane. It catalyses the reaction a plastoquinone + NADH + (n+1) H(+)(in) = a plastoquinol + NAD(+) + n H(+)(out). The catalysed reaction is a plastoquinone + NADPH + (n+1) H(+)(in) = a plastoquinol + NADP(+) + n H(+)(out). In terms of biological role, NDH shuttles electrons from NAD(P)H:plastoquinone, via FMN and iron-sulfur (Fe-S) centers, to quinones in the photosynthetic chain and possibly in a chloroplast respiratory chain. The immediate electron acceptor for the enzyme in this species is believed to be plastoquinone. Couples the redox reaction to proton translocation, and thus conserves the redox energy in a proton gradient. The chain is NAD(P)H-quinone oxidoreductase subunit 2 B, chloroplastic from Coffea arabica (Arabian coffee).